A 122-amino-acid chain; its full sequence is Large ribosomal subunit protein uL14 (122 aa).

It belongs to the universal ribosomal protein uL14 family. Part of the 50S ribosomal subunit. Forms a cluster with proteins L3 and L19. In the 70S ribosome, L14 and L19 interact and together make contacts with the 16S rRNA in bridges B5 and B8.

Functionally, binds to 23S rRNA. Forms part of two intersubunit bridges in the 70S ribosome. The chain is Large ribosomal subunit protein uL14 from Streptococcus thermophilus (strain CNRZ 1066).